The following is a 470-amino-acid chain: L-seryl-tRNA(Sec) selenium transferase (470 aa).

Residue K294 is modified to N6-(pyridoxal phosphate)lysine.

Belongs to the SelA family. The cofactor is pyridoxal 5'-phosphate.

The protein localises to the cytoplasm. It carries out the reaction L-seryl-tRNA(Sec) + selenophosphate + H(+) = L-selenocysteinyl-tRNA(Sec) + phosphate. It functions in the pathway aminoacyl-tRNA biosynthesis; selenocysteinyl-tRNA(Sec) biosynthesis; selenocysteinyl-tRNA(Sec) from L-seryl-tRNA(Sec) (bacterial route): step 1/1. Its function is as follows. Converts seryl-tRNA(Sec) to selenocysteinyl-tRNA(Sec) required for selenoprotein biosynthesis. This Solidesulfovibrio magneticus (strain ATCC 700980 / DSM 13731 / RS-1) (Desulfovibrio magneticus) protein is L-seryl-tRNA(Sec) selenium transferase.